A 547-amino-acid chain; its full sequence is CTP synthase (547 aa).

The segment at 1–265 (MTRYVFITGG…DEIVLRKLHI (265 aa)) is amidoligase domain. Ser13 is a binding site for CTP. Ser13 serves as a coordination point for UTP. Residues 14–19 (SLGKGI) and Asp71 each bind ATP. Asp71 and Glu139 together coordinate Mg(2+). CTP-binding positions include 146–148 (DIE), 186–191 (KTKPTQ), and Lys222. Residues 186 to 191 (KTKPTQ) and Lys222 contribute to the UTP site. Residues 290 to 541 (TVGMVGKYVD…IRAARAQHEK (252 aa)) enclose the Glutamine amidotransferase type-1 domain. Gly351 contributes to the L-glutamine binding site. The Nucleophile; for glutamine hydrolysis role is filled by Cys378. L-glutamine is bound by residues 379 to 382 (LGMQ), Glu402, and Arg469. Catalysis depends on residues His514 and Glu516.

This sequence belongs to the CTP synthase family. Homotetramer.

The catalysed reaction is UTP + L-glutamine + ATP + H2O = CTP + L-glutamate + ADP + phosphate + 2 H(+). The enzyme catalyses L-glutamine + H2O = L-glutamate + NH4(+). It catalyses the reaction UTP + NH4(+) + ATP = CTP + ADP + phosphate + 2 H(+). Its pathway is pyrimidine metabolism; CTP biosynthesis via de novo pathway; CTP from UDP: step 2/2. Allosterically activated by GTP, when glutamine is the substrate; GTP has no effect on the reaction when ammonia is the substrate. The allosteric effector GTP functions by stabilizing the protein conformation that binds the tetrahedral intermediate(s) formed during glutamine hydrolysis. Inhibited by the product CTP, via allosteric rather than competitive inhibition. In terms of biological role, catalyzes the ATP-dependent amination of UTP to CTP with either L-glutamine or ammonia as the source of nitrogen. Regulates intracellular CTP levels through interactions with the four ribonucleotide triphosphates. The protein is CTP synthase of Thioalkalivibrio sulfidiphilus (strain HL-EbGR7).